Here is a 684-residue protein sequence, read N- to C-terminus: Cyclic nucleotide-gated channel alpha-1 (684 aa).

At 1–161 (MKTNIINTWH…PSGNTYYNWL (161 aa)) the chain is on the cytoplasmic side. The disordered stretch occupies residues 34–145 (ACSSFSDDDN…TKEKKEEEKK (112 aa)). Acidic residues predominate over residues 39–54 (SDDDNGSLSEESENED). Positions 105-145 (SKADDKNENKKDPEKKKKKEKEKEKKKKEEKTKEKKEEEKK) are enriched in basic and acidic residues. A helical membrane pass occupies residues 162–183 (FCITLPVMYNWTMIIARACFDE). At 184–193 (LQSDYLEYWL) the chain is on the extracellular side. The chain crosses the membrane as a helical span at residues 194 to 214 (IFDYVSDVVYLADMFVRTRTG). Residues 215–239 (YLEQGLLVKDRMKLIEKYKANLQFK) are Cytoplasmic-facing. Residues 240 to 258 (LDVLSVIPTDLLYIKFGWN) form a helical membrane-spanning segment. Residues 259 to 263 (YPEIR) lie on the Extracellular side of the membrane. The helical transmembrane segment at 264-282 (LNRLLRISRMFEFFQRTET) threads the bilayer. Residues 283–289 (RTNYPNI) are Cytoplasmic-facing. An ion conduction pathway region spans residues 287 to 395 (PNIFRISNLV…GNIGSMISNM (109 aa)). A helical transmembrane segment spans residues 290 to 313 (FRISNLVMYIVIIIHWNACVYYSI). The Extracellular segment spans residues 314–336 (SKAIGFGNDTWVYPDVNDPEFGR). Residue N321 is glycosylated (N-linked (GlcNAc...) asparagine). A run of 2 helical transmembrane segments spans residues 337-371 (LARK…IFVV) and 372-396 (VDFL…SNMN). The tract at residues 354 to 357 (TIGE) is selectivity filter. The C-linker stretch occupies residues 397-473 (AARAEFQSRV…DTLKKVRIFA (77 aa)). Residues 397 to 684 (AARAEFQSRV…ESELTESLQD (288 aa)) lie on the Cytoplasmic side of the membrane. Residues 477-597 (AGLLVELVLK…EEKGRQILMK (121 aa)) are cyclic nucleotide-binding domain. Positions 537, 540, 553, and 554 each coordinate 3',5'-cyclic GMP. Residues R553 and T554 each contribute to the 3',5'-cyclic AMP site. Residues 615–669 (LEEKVTRMEGSVDLLQTRFARILAEYESMQQKLKQRLTKVEKFLKPLIETEFSAL) are a coiled coil.

This sequence belongs to the cyclic nucleotide-gated cation channel (TC 1.A.1.5) family. CNGA1 subfamily. In terms of assembly, forms heterotetrameric channels composed of CNGA1 and CNGB1 subunits with 3:1 stoichiometry. May also form cyclic nucleotide-activated homotetrameric channels, that are efficiently activated by saturating cGMP, but poorly activated by saturating cAMP compared to the heterotetramer with CNGB1. The channel binds Ca(2+)-bound CALM1 via CaM1 and CaM2 regions of the CNGB1 subunit; this interaction modulates the affinity of the channel for cNMPs in response to intracellular Ca(2+) levels. Rod cells in the retina and inner medulla of kidney.

It is found in the cell membrane. It catalyses the reaction Ca(2+)(in) = Ca(2+)(out). The enzyme catalyses Na(+)(in) = Na(+)(out). The catalysed reaction is K(+)(in) = K(+)(out). It carries out the reaction NH4(+)(in) = NH4(+)(out). It catalyses the reaction Rb(+)(in) = Rb(+)(out). The enzyme catalyses Li(+)(in) = Li(+)(out). The catalysed reaction is Cs(+)(in) = Cs(+)(out). Functionally, pore-forming subunit of the rod cyclic nucleotide-gated channel. Mediates rod photoresponses at dim light converting transient changes in intracellular cGMP levels into electrical signals. In the dark, cGMP levels are high and keep the channel open enabling a steady inward current carried by Na(+) and Ca(2+) ions that leads to membrane depolarization and neurotransmitter release from synaptic terminals. Upon photon absorption cGMP levels decline leading to channel closure and membrane hyperpolarization that ultimately slows neurotransmitter release and signals the presence of light, the end point of the phototransduction cascade. Conducts cGMP- and cAMP-gated ion currents, with permeability for monovalent and divalent cations. The selectivity for Ca(2+) over Na(+) increases with cGMP concentrations, whereas the selectivity among monovalent ions is independent of the cGMP levels. This chain is Cyclic nucleotide-gated channel alpha-1 (Cnga1), found in Mus musculus (Mouse).